The primary structure comprises 390 residues: Chorismate synthase 2 (390 aa).

Positions 39 and 45 each coordinate NADP(+). FMN is bound by residues 132-134 (RSS), 253-254 (NA), glycine 298, 313-317 (KPIPT), and arginine 339.

The protein belongs to the chorismate synthase family. As to quaternary structure, homotetramer. FMNH2 is required as a cofactor.

The enzyme catalyses 5-O-(1-carboxyvinyl)-3-phosphoshikimate = chorismate + phosphate. The protein operates within metabolic intermediate biosynthesis; chorismate biosynthesis; chorismate from D-erythrose 4-phosphate and phosphoenolpyruvate: step 7/7. In terms of biological role, catalyzes the anti-1,4-elimination of the C-3 phosphate and the C-6 proR hydrogen from 5-enolpyruvylshikimate-3-phosphate (EPSP) to yield chorismate, which is the branch point compound that serves as the starting substrate for the three terminal pathways of aromatic amino acid biosynthesis. This reaction introduces a second double bond into the aromatic ring system. The protein is Chorismate synthase 2 of Bacillus cereus (strain ATCC 10987 / NRS 248).